Reading from the N-terminus, the 107-residue chain is MSYVLIVFASLLSCGGQLCQKQAAHTRARQRVWGWLALSLVLLGCAMLLWLFVLQTVPVSVAYPMLSLNFIFITLAARFIWHEPIALRHGVGVLLIIVGIILLGGAA.

The region spanning 31–105 is the EamA domain; it reads RVWGWLALSL…IIVGIILLGG (75 aa). A run of 3 helical transmembrane segments spans residues 34 to 54, 57 to 77, and 85 to 105; these read GWLALSLVLLGCAMLLWLFVL, VPVSVAYPMLSLNFIFITLAA, and IALRHGVGVLLIIVGIILLGG.

It belongs to the ArnE family. Heterodimer of ArnE and ArnF.

Its subcellular location is the cell inner membrane. It participates in bacterial outer membrane biogenesis; lipopolysaccharide biosynthesis. Functionally, translocates 4-amino-4-deoxy-L-arabinose-phosphoundecaprenol (alpha-L-Ara4N-phosphoundecaprenol) from the cytoplasmic to the periplasmic side of the inner membrane. The chain is Probable 4-amino-4-deoxy-L-arabinose-phosphoundecaprenol flippase subunit ArnE from Enterobacter sp. (strain 638).